Consider the following 525-residue polypeptide: DNA damage-binding protein cmr1 (525 aa).

Positions 34–50 (TGVFTSNMPRGTSANQS) are enriched in polar residues. Disordered regions lie at residues 34–103 (TGVF…ERAK), 214–240 (DASQ…DPDP), and 282–301 (TSSV…PISG). Residues 83-102 (EIAKRKADEEYDRRQEEERA) show a composition bias toward basic and acidic residues. The stretch at 182–223 (ITPERIYSMTFHPSEAKPVIFAGDKMGHLGILDASQEKPTSA) is one WD 1 repeat. Acidic residues predominate over residues 227 to 239 (EDDEDDEDDDDPD). WD repeat units lie at residues 247 to 287 (PHTR…SVEK), 339 to 379 (LSEK…HTDP), 384 to 425 (EHQS…SSWK), 448 to 491 (GRWV…LAQL), and 494 to 525 (DGIT…CLWM).

The protein belongs to the WD repeat DDB2/WDR76 family.

Its function is as follows. DNA-binding protein that binds to both single- and double-stranded DNA. Binds preferentially to UV-damaged DNA. May be involved in DNA-metabolic processes. This chain is DNA damage-binding protein cmr1, found in Emericella nidulans (strain FGSC A4 / ATCC 38163 / CBS 112.46 / NRRL 194 / M139) (Aspergillus nidulans).